The chain runs to 857 residues: Cation/H(+) antiporter 25 (857 aa).

Transmembrane regions (helical) follow at residues 65-85, 93-110, 122-142, 161-181, 194-214, 227-247, 259-279, 313-333, 385-405, 413-435, and 447-467; these read FSTF…VYVL, RIVC…SMLG, PIAN…FFFL, YIAA…GAAL, SIGG…YTVL, FAMS…VLFE, YSVI…LLVV, FLTD…GLVV, IYMS…AALF, SLTL…LHWI, and VMVL…SFLY. Serine 855 carries the post-translational modification Phosphoserine.

Belongs to the monovalent cation:proton antiporter 2 (CPA2) transporter (TC 2.A.37) family. CHX (TC 2.A.37.4) subfamily. As to expression, specifically expressed in pollen.

It localises to the membrane. In terms of biological role, may operate as a cation/H(+) antiporter. The protein is Cation/H(+) antiporter 25 (CHX25) of Arabidopsis thaliana (Mouse-ear cress).